Consider the following 284-residue polypeptide: Bifunctional protein FolD 2 (284 aa).

Residues 166–168 and Ile-232 each bind NADP(+); that span reads GAS.

It belongs to the tetrahydrofolate dehydrogenase/cyclohydrolase family. As to quaternary structure, homodimer.

It catalyses the reaction (6R)-5,10-methylene-5,6,7,8-tetrahydrofolate + NADP(+) = (6R)-5,10-methenyltetrahydrofolate + NADPH. It carries out the reaction (6R)-5,10-methenyltetrahydrofolate + H2O = (6R)-10-formyltetrahydrofolate + H(+). It participates in one-carbon metabolism; tetrahydrofolate interconversion. Functionally, catalyzes the oxidation of 5,10-methylenetetrahydrofolate to 5,10-methenyltetrahydrofolate and then the hydrolysis of 5,10-methenyltetrahydrofolate to 10-formyltetrahydrofolate. The protein is Bifunctional protein FolD 2 of Colwellia psychrerythraea (strain 34H / ATCC BAA-681) (Vibrio psychroerythus).